The chain runs to 691 residues: Homeobox protein NOBOX (691 aa).

The span at Glu94–Glu103 shows a compositional bias: basic and acidic residues. The interval Glu94–Val233 is disordered. The span at Pro216–Ala228 shows a compositional bias: polar residues. The segment at residues Arg272–Glu363 is a DNA-binding region (homeobox). Disordered stretches follow at residues Asn366–Ser385, Val394–Val437, and Gln635–Pro691. Pro residues predominate over residues Pro395–Gln405. Positions Thr420–Glu432 are enriched in polar residues. A compositionally biased stretch (basic and acidic residues) spans Glu679–Pro691.

Expressed in ovaries, testes and pancreas. Expressed within all stages of the adult female germline, from primordial follicles through to MII oocytes.

It is found in the nucleus. In terms of biological role, transcription factor which may play a role in oogenesis. Binds preferentially to the DNA sequences 5'-TAATTG-3', 5'-TAGTTG-3' and 5'-TAATTA-3'. The sequence is that of Homeobox protein NOBOX (NOBOX) from Homo sapiens (Human).